A 487-amino-acid polypeptide reads, in one-letter code: Kynureninase 1 (487 aa).

Residues L149, T150, 177 to 180, S234, D263, H266, and Y288 contribute to the pyridoxal 5'-phosphate site; that span reads FPSD. K289 carries the N6-(pyridoxal phosphate)lysine modification. Pyridoxal 5'-phosphate is bound by residues W329 and N357.

It belongs to the kynureninase family. As to quaternary structure, homodimer. Pyridoxal 5'-phosphate is required as a cofactor.

Its subcellular location is the cytoplasm. The enzyme catalyses L-kynurenine + H2O = anthranilate + L-alanine + H(+). The catalysed reaction is 3-hydroxy-L-kynurenine + H2O = 3-hydroxyanthranilate + L-alanine + H(+). It participates in amino-acid degradation; L-kynurenine degradation; L-alanine and anthranilate from L-kynurenine: step 1/1. It functions in the pathway cofactor biosynthesis; NAD(+) biosynthesis; quinolinate from L-kynurenine: step 2/3. Functionally, catalyzes the cleavage of L-kynurenine (L-Kyn) and L-3-hydroxykynurenine (L-3OHKyn) into anthranilic acid (AA) and 3-hydroxyanthranilic acid (3-OHAA), respectively. This chain is Kynureninase 1 (bna5-1), found in Emericella nidulans (strain FGSC A4 / ATCC 38163 / CBS 112.46 / NRRL 194 / M139) (Aspergillus nidulans).